Reading from the N-terminus, the 142-residue chain is ATP synthase epsilon chain (142 aa).

This sequence belongs to the ATPase epsilon chain family. As to quaternary structure, F-type ATPases have 2 components, CF(1) - the catalytic core - and CF(0) - the membrane proton channel. CF(1) has five subunits: alpha(3), beta(3), gamma(1), delta(1), epsilon(1). CF(0) has three main subunits: a, b and c.

It is found in the cell inner membrane. In terms of biological role, produces ATP from ADP in the presence of a proton gradient across the membrane. The chain is ATP synthase epsilon chain from Histophilus somni (strain 129Pt) (Haemophilus somnus).